The primary structure comprises 1715 residues: MLYAACGGTQRGISFNDLLCGLVLITRGTQAEKTKFLWNLYCNDAGTFIIKSDYVRNVNLAPFESVSLFAQSERVNFEQFQDWIIKHRNATVLSKWLLSDNCVSLTSELETPTFYQSLAGVTHLEEKDIGDLEKEFWRLKNTSQNGQIDLQFLGPLISPPIPKNALAGLFNAFDENRDGHIDFKELCCGVSAACRGPGVERTRFCFKIFDVDRDGVLSHDETLQMINVLLLVAKENQESQQYKDLTKQLVISDLLEFGQRRSPDGTPSKLTRDNVSLTAEDFMLWTVQCDLRLMQPLLDLIFELCHIVFGLWPQCKHMENDIVRGWLRREERRPYRVGQFWYLITHDWWLSWMQYTQHTTHTCDYCKRTASQRTAVDEALVCDESFNTHSLEQHDSYSLGSGTGSASGSGSASSGISAGRHCGPVRPGPIDNSNLITANPFRNVRTLTGEGGHLKRDTPLVQNHDFELVPKSLWKALNRWYGDNLPLPRQVIQPPNSDVELELYPLNLRILLHQAQPSQTGVGGGTQLGSWGSTVSGGYGVLASGGGYAAIAVSSVLQPPKRYLAYTAAFSRLATVRQVGEFLCEQLRLKSEDIRLWHVPQLDNGAILLEEDAMCLKELLIRDNDQLLLEIRNKDLTWPEELGSLATAQCGQGAGTPGDRRRLTRSSIMSVHAPGATGLHNLGNTCFMNAALQVLFNTQPLAQYFQREMHRFEVNAANKLGTKGQLAMRYAELLKEVWTATTRSVAPLKLRFCVNKYAPQFAGGGQHDSQELLEWLLDALHEDLNRVMEKPYSELKDSNGRPDKIVAAEAWSQHHARNQSIIIDLFYGQLKSKVSCLGCGHESVRFDPFSLLSLPLPVENYIYFEVLVILLDGSVPIKYGFRLNSDCKYSHLKHKLSTMCSLPPNLMLVCELWNSQIRQVLNDDEKLRTQSAKELYVYQLPEQSMRTRSNSGLSMHIEQGLKDIQRSSALITSAQDSLSSLSTLQTSSHRASSRVLCNGHVSGLDVEGEAEVGTDVSQCNSNSNYNPIVSTYSGNGSGDNQVHELLPDEAGKVSRCFGKRECMPHSLFCFKESLILSSSPENTFMHGAAAQQKRVSSAKLLHTESNTSSMSYTNHSGENSMESSLTEPIPLADLEPVSSRNGSGGEDCSYRTSPNDSSGLSTGHTLGASLDVDEQAEEGNAEDHDQPDQITTSQPETSSGVYSRRSSQPPHKAGKYLVAVHRKITRHDSYFLSYHKTRPSLFGVPLLIPNSEGGTHKDLYCAVWLQVSRLLSPLPATTEQANHAADCDDSLGYDFPFTLRAVKADGLTCAICPWSSFCRGCEIRCNNDYVLQGALPPINAAASNTSTPKMNAKFPSLPNLEAKRTPEYTASLSYTPTTKYFEDFTIAIDWDPTALHLRYQSTLERLWVDHETIAISRREQVEPVDLNHCLRAFTSEEKLEQWYHCSHCKGKKPATKKLQIWKLPPILIVHLKRFNCVNGKWVKSQKVVHFPFDDFDPTPYLASVPQETILRHKELLELKNDAEMTMATNEVVSELDEIDAPSKEVKEELPNQTGSTKATASPPPTGNILRQSKTKNAVRRQRLISTSLTKTPIVDGEFEDYHQHRLKPDVDQFDPRYRLYAVVSHSGMLNGGHYISYASNATGSWYCYNDSSCREISQKPVIDPSAAYLLFYERKGLDYEPYLPNIEGRTLPNTASVPLEVDETEGELKKLCSIS.

2 consecutive EF-hand domains span residues 161–196 (IPKN…ACRG) and 197–232 (PGVE…LLLV). 9 residues coordinate Ca(2+): aspartate 174, asparagine 176, aspartate 178, histidine 180, glutamate 185, aspartate 210, aspartate 212, aspartate 214, and glutamate 221. One can recognise a DUSP domain in the interval 314–492 (QCKHMENDIV…DNLPLPRQVI (179 aa)). A disordered region spans residues 393-429 (QHDSYSLGSGTGSASGSGSASSGISAGRHCGPVRPGP). The segment covering 408-419 (GSGSASSGISAG) has biased composition (low complexity). The USP domain maps to 677–1675 (TGLHNLGNTC…AAYLLFYERK (999 aa)). Catalysis depends on cysteine 686, which acts as the Nucleophile. 2 stretches are compositionally biased toward polar residues: residues 1103 to 1126 (TESN…SSLT) and 1150 to 1164 (YRTS…STGH). Disordered regions lie at residues 1103 to 1213 (TESN…PHKA) and 1536 to 1569 (DEID…GNIL). The segment covering 1171 to 1180 (DVDEQAEEGN) has biased composition (acidic residues). The span at 1188-1209 (DQITTSQPETSSGVYSRRSSQP) shows a compositional bias: polar residues. Over residues 1540–1549 (APSKEVKEEL) the composition is skewed to basic and acidic residues. Polar residues predominate over residues 1550–1559 (PNQTGSTKAT). Histidine 1633 (proton acceptor) is an active-site residue.

This sequence belongs to the peptidase C19 family. USP20/USP33 subfamily.

It catalyses the reaction Thiol-dependent hydrolysis of ester, thioester, amide, peptide and isopeptide bonds formed by the C-terminal Gly of ubiquitin (a 76-residue protein attached to proteins as an intracellular targeting signal).. Functionally, deubiquitinating enzyme that acts as an inhibitor of mitophagy probably by counteracting the action of park. Possibly functions by hydrolyzing ubiquitin attached by park on target proteins, thereby reducing park's ability to drive mitophagy. This Drosophila melanogaster (Fruit fly) protein is Ubiquitin carboxyl-terminal hydrolase 32.